A 601-amino-acid chain; its full sequence is Elongation factor 4 (601 aa).

In terms of domain architecture, tr-type G spans 5–187; sequence DKIRNFSIIA…SIVKDLPAPQ (183 aa). Residues 17-22 and 134-137 contribute to the GTP site; these read DHGKST and NKVD.

It belongs to the TRAFAC class translation factor GTPase superfamily. Classic translation factor GTPase family. LepA subfamily.

The protein localises to the cell inner membrane. The catalysed reaction is GTP + H2O = GDP + phosphate + H(+). Required for accurate and efficient protein synthesis under certain stress conditions. May act as a fidelity factor of the translation reaction, by catalyzing a one-codon backward translocation of tRNAs on improperly translocated ribosomes. Back-translocation proceeds from a post-translocation (POST) complex to a pre-translocation (PRE) complex, thus giving elongation factor G a second chance to translocate the tRNAs correctly. Binds to ribosomes in a GTP-dependent manner. The chain is Elongation factor 4 from Maridesulfovibrio salexigens (strain ATCC 14822 / DSM 2638 / NCIMB 8403 / VKM B-1763) (Desulfovibrio salexigens).